Consider the following 124-residue polypeptide: Small ribosomal subunit protein uS12 (124 aa).

3-methylthioaspartic acid is present on aspartate 89.

It belongs to the universal ribosomal protein uS12 family. As to quaternary structure, part of the 30S ribosomal subunit. Contacts proteins S8 and S17. May interact with IF1 in the 30S initiation complex.

In terms of biological role, with S4 and S5 plays an important role in translational accuracy. Interacts with and stabilizes bases of the 16S rRNA that are involved in tRNA selection in the A site and with the mRNA backbone. Located at the interface of the 30S and 50S subunits, it traverses the body of the 30S subunit contacting proteins on the other side and probably holding the rRNA structure together. The combined cluster of proteins S8, S12 and S17 appears to hold together the shoulder and platform of the 30S subunit. In Thermoanaerobacter pseudethanolicus (strain ATCC 33223 / 39E) (Clostridium thermohydrosulfuricum), this protein is Small ribosomal subunit protein uS12.